Reading from the N-terminus, the 553-residue chain is Glycerol-3-phosphate dehydrogenase (553 aa).

13–41 contacts FAD; the sequence is DLIVIGGGINGVGTARDGALRGLKTLLIE.

It belongs to the FAD-dependent glycerol-3-phosphate dehydrogenase family. FAD is required as a cofactor.

The protein localises to the cytoplasm. It catalyses the reaction a quinone + sn-glycerol 3-phosphate = dihydroxyacetone phosphate + a quinol. The polypeptide is Glycerol-3-phosphate dehydrogenase (glpD) (Synechocystis sp. (strain ATCC 27184 / PCC 6803 / Kazusa)).